We begin with the raw amino-acid sequence, 122 residues long: Large ribosomal subunit protein uL18 (122 aa).

Belongs to the universal ribosomal protein uL18 family. In terms of assembly, part of the 50S ribosomal subunit; part of the 5S rRNA/L5/L18/L25 subcomplex. Contacts the 5S and 23S rRNAs.

Its function is as follows. This is one of the proteins that bind and probably mediate the attachment of the 5S RNA into the large ribosomal subunit, where it forms part of the central protuberance. The protein is Large ribosomal subunit protein uL18 of Petrotoga mobilis (strain DSM 10674 / SJ95).